A 208-amino-acid chain; its full sequence is Small ribosomal subunit protein uS4 (208 aa).

The 64-residue stretch at 98-161 (RRLDNVIYRM…KELEIIKESL (64 aa)) folds into the S4 RNA-binding domain.

This sequence belongs to the universal ribosomal protein uS4 family. In terms of assembly, part of the 30S ribosomal subunit. Contacts protein S5. The interaction surface between S4 and S5 is involved in control of translational fidelity.

One of the primary rRNA binding proteins, it binds directly to 16S rRNA where it nucleates assembly of the body of the 30S subunit. In terms of biological role, with S5 and S12 plays an important role in translational accuracy. The chain is Small ribosomal subunit protein uS4 from Thermodesulfovibrio yellowstonii (strain ATCC 51303 / DSM 11347 / YP87).